The primary structure comprises 283 residues: Pantothenate synthetase (283 aa).

Met30–His37 serves as a coordination point for ATP. The active-site Proton donor is the His37. Gln61 contributes to the (R)-pantoate binding site. Gln61 is a binding site for beta-alanine. Gly147–Asp150 contributes to the ATP binding site. Position 153 (Gln153) interacts with (R)-pantoate. ATP is bound by residues Val176 and Met184 to Arg187.

The protein belongs to the pantothenate synthetase family. In terms of assembly, homodimer.

The protein localises to the cytoplasm. It carries out the reaction (R)-pantoate + beta-alanine + ATP = (R)-pantothenate + AMP + diphosphate + H(+). The protein operates within cofactor biosynthesis; (R)-pantothenate biosynthesis; (R)-pantothenate from (R)-pantoate and beta-alanine: step 1/1. Functionally, catalyzes the condensation of pantoate with beta-alanine in an ATP-dependent reaction via a pantoyl-adenylate intermediate. This chain is Pantothenate synthetase, found in Nitratidesulfovibrio vulgaris (strain DSM 19637 / Miyazaki F) (Desulfovibrio vulgaris).